Reading from the N-terminus, the 198-residue chain is Pyridoxal 5'-phosphate synthase subunit PdxT (198 aa).

50 to 52 provides a ligand contact to L-glutamine; sequence GES. The active-site Nucleophile is the cysteine 82. Residues arginine 114 and 143 to 144 each bind L-glutamine; that span reads IR. Residues histidine 179 and glutamate 181 each act as charge relay system in the active site.

It belongs to the glutaminase PdxT/SNO family. As to quaternary structure, in the presence of PdxS, forms a dodecamer of heterodimers. Only shows activity in the heterodimer.

It carries out the reaction aldehydo-D-ribose 5-phosphate + D-glyceraldehyde 3-phosphate + L-glutamine = pyridoxal 5'-phosphate + L-glutamate + phosphate + 3 H2O + H(+). The catalysed reaction is L-glutamine + H2O = L-glutamate + NH4(+). It functions in the pathway cofactor biosynthesis; pyridoxal 5'-phosphate biosynthesis. Functionally, catalyzes the hydrolysis of glutamine to glutamate and ammonia as part of the biosynthesis of pyridoxal 5'-phosphate. The resulting ammonia molecule is channeled to the active site of PdxS. The chain is Pyridoxal 5'-phosphate synthase subunit PdxT from Metallosphaera sedula (strain ATCC 51363 / DSM 5348 / JCM 9185 / NBRC 15509 / TH2).